A 242-amino-acid chain; its full sequence is Transcriptional regulatory protein btr (242 aa).

Residues 158-231 (MRSEQRLAAF…QREVRLIDLP (74 aa)) form the HTH crp-type domain. The segment at residues 191 to 210 (REEIGNYLGLTLETVSRLFS) is a DNA-binding region (H-T-H motif).

Its function is as follows. May regulate gene expression in response to changes in oxygen levels or to changes in the redox potential of the bacterial environment. The sequence is that of Transcriptional regulatory protein btr (btr) from Bordetella pertussis (strain Tohama I / ATCC BAA-589 / NCTC 13251).